The chain runs to 270 residues: tRNA pseudouridine synthase A (270 aa).

Asp52 serves as the catalytic Nucleophile. Position 110 (Tyr110) interacts with substrate.

Belongs to the tRNA pseudouridine synthase TruA family. In terms of assembly, homodimer.

It carries out the reaction uridine(38/39/40) in tRNA = pseudouridine(38/39/40) in tRNA. In terms of biological role, formation of pseudouridine at positions 38, 39 and 40 in the anticodon stem and loop of transfer RNAs. This chain is tRNA pseudouridine synthase A, found in Paraburkholderia xenovorans (strain LB400).